Here is a 122-residue protein sequence, read N- to C-terminus: Large ribosomal subunit protein uL14c (122 aa).

It belongs to the universal ribosomal protein uL14 family. Part of the 50S ribosomal subunit.

It localises to the plastid. The protein resides in the chloroplast. Functionally, binds to 23S rRNA. In Zygnema circumcarinatum (Green alga), this protein is Large ribosomal subunit protein uL14c.